Here is a 148-residue protein sequence, read N- to C-terminus: Macrodomain Ter protein (148 aa).

It belongs to the MatP family. Homodimer.

The protein localises to the cytoplasm. Functionally, required for spatial organization of the terminus region of the chromosome (Ter macrodomain) during the cell cycle. Prevents early segregation of duplicated Ter macrodomains during cell division. Binds specifically to matS, which is a 13 bp signature motif repeated within the Ter macrodomain. This is Macrodomain Ter protein from Photobacterium profundum (strain SS9).